The sequence spans 133 residues: Small ribosomal subunit protein uS15 (133 aa).

It belongs to the universal ribosomal protein uS15 family. As to quaternary structure, part of the 30S ribosomal subunit.

The protein is Small ribosomal subunit protein uS15 of Methanosphaera stadtmanae (strain ATCC 43021 / DSM 3091 / JCM 11832 / MCB-3).